The primary structure comprises 139 residues: MANSSSGVAIHDDCKLKFNELQSKRMHRFITFMMDNKGKEIIVDKIGDRTTSYEDFTSSLPEGDCRFAIYDFDFLTAEDVPKSRIFYILWSPDNAKVRSKMLYASSNERFKKELNGIQLEVQATDAGEISLDALKDRVK.

An ADF-H domain is found at 5-139 (SSGVAIHDDC…SLDALKDRVK (135 aa)).

The protein belongs to the actin-binding proteins ADF family. Interacts with LECRK1 (via kinase domain).

Its subcellular location is the cytoplasm. It is found in the cytoskeleton. In terms of biological role, actin-depolymerizing protein. Severs actin filaments (F-actin) and binds to actin monomers. Involved in innate immunity. Required for the expression of defense-related genes PR1A, LOX2 and CHS1 upon biotic stresses. Required for basal resistance to the fungal blast (Magnaporthe grisea), bacterial blight (Xanthomonas oryzae pv. oryzae, Xoo) and the herbivorous insect brown planthopper (Nilaparvata lugens, BPH). Involved in the promotion of seed germination. Required for the expression of alpha-amylase genes during seed germination. The polypeptide is Actin-depolymerizing factor 4 (ADF4) (Oryza sativa subsp. japonica (Rice)).